The sequence spans 312 residues: Glyoxylate/hydroxypyruvate reductase A (312 aa).

The active site involves Arg227. His275 (proton donor) is an active-site residue.

It belongs to the D-isomer specific 2-hydroxyacid dehydrogenase family. GhrA subfamily.

The protein resides in the cytoplasm. The catalysed reaction is glycolate + NADP(+) = glyoxylate + NADPH + H(+). It carries out the reaction (R)-glycerate + NAD(+) = 3-hydroxypyruvate + NADH + H(+). It catalyses the reaction (R)-glycerate + NADP(+) = 3-hydroxypyruvate + NADPH + H(+). Functionally, catalyzes the NADPH-dependent reduction of glyoxylate and hydroxypyruvate into glycolate and glycerate, respectively. The chain is Glyoxylate/hydroxypyruvate reductase A from Salmonella agona (strain SL483).